Consider the following 524-residue polypeptide: Protein-export membrane protein SecD (524 aa).

6 helical membrane-spanning segments follow: residues 10–30, 366–386, 389–409, 420–442, 465–485, and 487–507; these read VIFL…PTMG, KFDS…VVFI, GKPQ…YILL, DLSV…IIIA, FWVI…LAVL, and LGDL…GVLV.

Belongs to the SecD/SecF family. SecD subfamily. As to quaternary structure, part of the protein translocation apparatus. Forms a homodimer and complexes with SecF.

The protein localises to the cell membrane. In terms of biological role, involved in protein export. This is Protein-export membrane protein SecD from Haloferax volcanii (strain ATCC 29605 / DSM 3757 / JCM 8879 / NBRC 14742 / NCIMB 2012 / VKM B-1768 / DS2) (Halobacterium volcanii).